Consider the following 212-residue polypeptide: Peptide methionine sulfoxide reductase MsrA (212 aa).

The active site involves C52.

It belongs to the MsrA Met sulfoxide reductase family.

It catalyses the reaction L-methionyl-[protein] + [thioredoxin]-disulfide + H2O = L-methionyl-(S)-S-oxide-[protein] + [thioredoxin]-dithiol. The catalysed reaction is [thioredoxin]-disulfide + L-methionine + H2O = L-methionine (S)-S-oxide + [thioredoxin]-dithiol. Its function is as follows. Has an important function as a repair enzyme for proteins that have been inactivated by oxidation. Catalyzes the reversible oxidation-reduction of methionine sulfoxide in proteins to methionine. The chain is Peptide methionine sulfoxide reductase MsrA from Salmonella arizonae (strain ATCC BAA-731 / CDC346-86 / RSK2980).